Reading from the N-terminus, the 218-residue chain is Very-long-chain (3R)-3-hydroxyacyl-CoA dehydratase hpo-8 (218 aa).

The next 5 membrane-spanning stretches (helical) occupy residues 15–35, 44–64, 86–106, 137–157, and 176–196; these read ILGW…GLTW, FELK…IVGL, ILHL…LVAW, LFYV…FASL, and MGIS…PGFP. Residues Y142 and E149 contribute to the active site.

Belongs to the very long-chain fatty acids dehydratase HACD family.

It localises to the membrane. The catalysed reaction is a very-long-chain (3R)-3-hydroxyacyl-CoA = a very-long-chain (2E)-enoyl-CoA + H2O. Its pathway is lipid metabolism; fatty acid biosynthesis. Catalyzes the third of the four reactions of the long-chain fatty acids elongation cycle. This endoplasmic reticulum-bound enzymatic process, allows the addition of two carbons to the chain of long- and very long-chain fatty acids/VLCFAs per cycle. This enzyme catalyzes the dehydration of the 3-hydroxyacyl-CoA intermediate into trans-2,3-enoyl-CoA, within each cycle of fatty acid elongation. Thereby, it participates in the production of VLCFAs of different chain lengths that are involved in multiple biological processes as precursors of membrane lipids and lipid mediators. The sequence is that of Very-long-chain (3R)-3-hydroxyacyl-CoA dehydratase hpo-8 (hpo-8) from Caenorhabditis elegans.